The sequence spans 256 residues: Triosephosphate isomerase (256 aa).

Substrate is bound at residue 10–12; that stretch reads NWK. Residue histidine 97 is the Electrophile of the active site. The active-site Proton acceptor is the glutamate 169. Residues glycine 175, serine 214, and 235–236 each bind substrate; that span reads GG.

This sequence belongs to the triosephosphate isomerase family. Homodimer.

It is found in the cytoplasm. It catalyses the reaction D-glyceraldehyde 3-phosphate = dihydroxyacetone phosphate. Its pathway is carbohydrate biosynthesis; gluconeogenesis. It functions in the pathway carbohydrate degradation; glycolysis; D-glyceraldehyde 3-phosphate from glycerone phosphate: step 1/1. Its function is as follows. Involved in the gluconeogenesis. Catalyzes stereospecifically the conversion of dihydroxyacetone phosphate (DHAP) to D-glyceraldehyde-3-phosphate (G3P). This is Triosephosphate isomerase from Actinobacillus pleuropneumoniae serotype 7 (strain AP76).